We begin with the raw amino-acid sequence, 230 residues long: Flagellar L-ring protein (230 aa).

The signal sequence occupies residues 1–22 (MSPISNFARIALACTVAALLGG). A lipid anchor (N-palmitoyl cysteine) is attached at C23. A lipid anchor (S-diacylglycerol cysteine) is attached at C23.

This sequence belongs to the FlgH family. As to quaternary structure, the basal body constitutes a major portion of the flagellar organelle and consists of four rings (L,P,S, and M) mounted on a central rod.

It is found in the cell outer membrane. The protein localises to the bacterial flagellum basal body. In terms of biological role, assembles around the rod to form the L-ring and probably protects the motor/basal body from shearing forces during rotation. This chain is Flagellar L-ring protein, found in Stenotrophomonas maltophilia (strain K279a).